A 487-amino-acid polypeptide reads, in one-letter code: Cobyric acid synthase (487 aa).

The region spanning 248–435 is the GATase cobBQ-type domain; it reads VLKVIVPVLP…LHGLFEGSQS (188 aa). Cysteine 329 acts as the Nucleophile in catalysis. Residue histidine 427 is part of the active site.

Belongs to the CobB/CobQ family. CobQ subfamily.

It participates in cofactor biosynthesis; adenosylcobalamin biosynthesis. In terms of biological role, catalyzes amidations at positions B, D, E, and G on adenosylcobyrinic A,C-diamide. NH(2) groups are provided by glutamine, and one molecule of ATP is hydrogenolyzed for each amidation. In Pseudomonas entomophila (strain L48), this protein is Cobyric acid synthase.